We begin with the raw amino-acid sequence, 402 residues long: tRNA pseudouridine synthase Pus10 (402 aa).

Aspartate 215 (nucleophile) is an active-site residue. Residues 370–402 are disordered; the sequence is ERGGHPGARGGTRRRPRKGPARPAGGRDRPRKT. Over residues 380 to 389 the composition is skewed to basic residues; the sequence is GTRRRPRKGP.

It belongs to the pseudouridine synthase Pus10 family.

It catalyses the reaction uridine(54) in tRNA = pseudouridine(54) in tRNA. The enzyme catalyses uridine(55) in tRNA = pseudouridine(55) in tRNA. Functionally, responsible for synthesis of pseudouridine from uracil-54 and uracil-55 in the psi GC loop of transfer RNAs. The protein is tRNA pseudouridine synthase Pus10 of Cenarchaeum symbiosum (strain A).